A 306-amino-acid polypeptide reads, in one-letter code: Ornithine carbamoyltransferase (306 aa).

Carbamoyl phosphate-binding positions include 53–56 (STRT), Q80, R104, and 131–134 (HPCQ). L-ornithine is bound by residues N162, D220, and 224-225 (SM). Residues 260 to 261 (CL) and R288 each bind carbamoyl phosphate.

The protein belongs to the aspartate/ornithine carbamoyltransferase superfamily. OTCase family.

It localises to the cytoplasm. It carries out the reaction carbamoyl phosphate + L-ornithine = L-citrulline + phosphate + H(+). It functions in the pathway amino-acid biosynthesis; L-arginine biosynthesis; L-arginine from L-ornithine and carbamoyl phosphate: step 1/3. In terms of biological role, reversibly catalyzes the transfer of the carbamoyl group from carbamoyl phosphate (CP) to the N(epsilon) atom of ornithine (ORN) to produce L-citrulline. The polypeptide is Ornithine carbamoyltransferase (Methylobacillus flagellatus (strain ATCC 51484 / DSM 6875 / VKM B-1610 / KT)).